The sequence spans 285 residues: Probable endonuclease 4 (285 aa).

9 residues coordinate Zn(2+): histidine 69, histidine 109, glutamate 145, aspartate 179, histidine 182, histidine 216, aspartate 229, histidine 231, and glutamate 261.

The protein belongs to the AP endonuclease 2 family. Zn(2+) serves as cofactor.

The enzyme catalyses Endonucleolytic cleavage to 5'-phosphooligonucleotide end-products.. In terms of biological role, endonuclease IV plays a role in DNA repair. It cleaves phosphodiester bonds at apurinic or apyrimidinic (AP) sites, generating a 3'-hydroxyl group and a 5'-terminal sugar phosphate. The polypeptide is Probable endonuclease 4 (Salmonella newport (strain SL254)).